The chain runs to 285 residues: UPF0173 metal-dependent hydrolase Pnuc_1524 (285 aa).

Belongs to the UPF0173 family.

The sequence is that of UPF0173 metal-dependent hydrolase Pnuc_1524 from Polynucleobacter asymbioticus (strain DSM 18221 / CIP 109841 / QLW-P1DMWA-1) (Polynucleobacter necessarius subsp. asymbioticus).